The chain runs to 264 residues: Ribonuclease HII (264 aa).

The RNase H type-2 domain maps to 33 to 224 (GPVAGVDEVG…VRRVASGSNT (192 aa)). 3 residues coordinate a divalent metal cation: aspartate 39, glutamate 40, and aspartate 133. The segment at 222–264 (SNTAEVADGQPDPRDGTAQTGEGRWSKSSHPATMRATGRAQGT) is disordered.

This sequence belongs to the RNase HII family. Mn(2+) serves as cofactor. Requires Mg(2+) as cofactor.

The protein resides in the cytoplasm. The enzyme catalyses Endonucleolytic cleavage to 5'-phosphomonoester.. In terms of biological role, endonuclease that specifically degrades the RNA of RNA-DNA hybrids. This Mycobacterium bovis (strain BCG / Pasteur 1173P2) protein is Ribonuclease HII.